Here is a 597-residue protein sequence, read N- to C-terminus: Alpha-1,2-mannosyltransferase MNN2 (597 aa).

The Cytoplasmic portion of the chain corresponds to 1–6 (MIAKQK). A helical membrane pass occupies residues 7–27 (IKILIGVIIVIATYHFIVSSN). The Extracellular segment spans residues 28 to 597 (VRSKDLSDLV…ETAEIPTVVS (570 aa)). The segment at 39–89 (LGSSDKSTTENERPKNNIVTNNRLDNPPNEDIPHAEPDSPPQEPPKSGNKP) is disordered. Residue Asn-382 is glycosylated (N-linked (GlcNAc...) asparagine).

Belongs to the MNN1/MNT family. Mn(2+) is required as a cofactor.

It is found in the golgi apparatus membrane. Its pathway is protein modification; protein glycosylation. Its activity is regulated as follows. Enzyme activity is regulated by iron. Functionally, alpha-1,2-mannosyltransferase required for cell wall integrity. Responsible for addition of the first alpha-1,2-linked mannose to form the branches on the mannan backbone of oligosaccharides. Addition of alpha-1,2-mannose is required for stabilization of the alpha-1,6-mannose backbone and hence regulates mannan fibril length; and is important for both immune recognition and virulence. Promotes iron uptake and usage along the endocytosis pathway under iron-limiting conditions. The chain is Alpha-1,2-mannosyltransferase MNN2 (MNN2) from Candida albicans (strain SC5314 / ATCC MYA-2876) (Yeast).